Consider the following 265-residue polypeptide: Undecaprenyl-diphosphatase (265 aa).

Helical transmembrane passes span 38–58, 80–100, 107–127, 135–155, 175–195, 213–233, and 244–264; these read SDMFNIVIQAGAILAVTIIYW, LIVAFLITAILGLVVKKLGFE, PIAWALIIGGIWMIFAEWAAA, ITWLVAILVGIAQIVAGVFPG, AAATEFAFLVGIPTMYAASGY, ALAIAFVVSTIVAFIAVKWLL, and FAIYRIILGVLLLGMTATGMI.

Belongs to the UppP family.

Its subcellular location is the cell inner membrane. It catalyses the reaction di-trans,octa-cis-undecaprenyl diphosphate + H2O = di-trans,octa-cis-undecaprenyl phosphate + phosphate + H(+). Its function is as follows. Catalyzes the dephosphorylation of undecaprenyl diphosphate (UPP). Confers resistance to bacitracin. The polypeptide is Undecaprenyl-diphosphatase (Rhizobium etli (strain ATCC 51251 / DSM 11541 / JCM 21823 / NBRC 15573 / CFN 42)).